The following is a 325-amino-acid chain: Glutarate 2-hydroxylase (325 aa).

Residues His160, Asp162, and His292 each contribute to the Fe cation site.

This sequence belongs to the glutarate hydroxylase family. As to quaternary structure, homotetramer. Requires Fe(2+) as cofactor.

The catalysed reaction is glutarate + 2-oxoglutarate + O2 = (S)-2-hydroxyglutarate + succinate + CO2. Its pathway is amino-acid degradation. In terms of biological role, acts as an alpha-ketoglutarate-dependent dioxygenase catalyzing hydroxylation of glutarate (GA) to L-2-hydroxyglutarate (L2HG). Functions in a L-lysine degradation pathway that proceeds via cadaverine, glutarate and L-2-hydroxyglutarate. This Shigella boydii serotype 18 (strain CDC 3083-94 / BS512) protein is Glutarate 2-hydroxylase.